The following is a 427-amino-acid chain: Transcription termination factor Rho (427 aa).

The Rho RNA-BD domain occupies 55-130 (YFFGEGVLEI…IKIEAINYRP (76 aa)). Residues 173 to 178 (GKGQRG), 185 to 190 (KAGKTT), and Arg216 contribute to the ATP site.

The protein belongs to the Rho family. As to quaternary structure, homohexamer. The homohexamer assembles into an open ring structure.

Its function is as follows. Facilitates transcription termination by a mechanism that involves Rho binding to the nascent RNA, activation of Rho's RNA-dependent ATPase activity, and release of the mRNA from the DNA template. This chain is Transcription termination factor Rho, found in Thermotoga maritima (strain ATCC 43589 / DSM 3109 / JCM 10099 / NBRC 100826 / MSB8).